We begin with the raw amino-acid sequence, 323 residues long: MKILLDTLGSDKGASELIEGAIMALEKKDFNLTIVGNEEENRNIVNKRFEEKIDFVNATETIENNESPTKAIRSKKDSSMRKCFDLLNEDYDGFLSTGSTGALLTGATLITKRLDNVSRPCLMVTVPSLKGEVVVLDVGANVDVTSDLLEQFAKMGYVYSKNILGKEDCKVGLLNIGVEEHKGDSLRLETYQKLSNYPYFKGNVEARDVLKGDFDVVVTDGFSGNILLKTIEGSVEFIKTLAKSKLSKLDEKSQQIIIPMIKSMSSGIDYNSVGSAPFLGTKKPVFKAHGSSNRNAIMSGILTLIKFIEEDVTDKLKKELTNE.

Belongs to the PlsX family. In terms of assembly, homodimer. Probably interacts with PlsY.

Its subcellular location is the cytoplasm. The enzyme catalyses a fatty acyl-[ACP] + phosphate = an acyl phosphate + holo-[ACP]. The protein operates within lipid metabolism; phospholipid metabolism. Functionally, catalyzes the reversible formation of acyl-phosphate (acyl-PO(4)) from acyl-[acyl-carrier-protein] (acyl-ACP). This enzyme utilizes acyl-ACP as fatty acyl donor, but not acyl-CoA. This is Phosphate acyltransferase from Finegoldia magna (strain ATCC 29328 / DSM 20472 / WAL 2508) (Peptostreptococcus magnus).